Here is a 79-residue protein sequence, read N- to C-terminus: UPF0654 protein C11D3.01c (79 aa).

The disordered stretch occupies residues 1–79; the sequence is MPNPGNVIGG…RAQEELENLE (79 aa). Residues 22–45 are compositionally biased toward basic and acidic residues; sequence EETKQREKEYLEEHEGEVGEEHQK.

It belongs to the UPF0654 (con-6) family.

This is UPF0654 protein C11D3.01c from Schizosaccharomyces pombe (strain 972 / ATCC 24843) (Fission yeast).